The primary structure comprises 360 residues: SPRY domain-containing SOCS box protein 3 (360 aa).

A disordered region spans residues 21-54 (DQDGRSPALHAEEEAWGYDSDGQHSNSDSDTDLL). In terms of domain architecture, B30.2/SPRY spans 84–274 (SLHPFRQIKS…MKVIRSCCCR (191 aa)). The SOCS box domain maps to 264–315 (SMKVIRSCCCRTSLQYLCCARLRQLLPGSVDSLEVLPLPPGLKQVLSNKLGW). A disordered region spans residues 322–350 (NRSSQHKGDGSATTSCGSYSDSSCTPGHD). Positions 332 to 346 (SATTSCGSYSDSSCT) are enriched in polar residues.

The protein belongs to the SPSB family. As to quaternary structure, substrate-recognition component of the ECS(SPSB3) complex, composed of spsb3, cul5, elob, elob and rnf7/rbx2.

Its subcellular location is the nucleus. The protein operates within protein modification; protein ubiquitination. Substrate-recognition component of a cullin-5-RING E3 ubiquitin-protein ligase complex (ECS complex, also named CRL5 complex), which mediates the ubiquitination and subsequent proteasomal degradation of target proteins. In Xenopus laevis (African clawed frog), this protein is SPRY domain-containing SOCS box protein 3 (spsb3).